A 125-amino-acid chain; its full sequence is Small ribosomal subunit protein mS41 (125 aa).

The N-terminal 23 residues, 1–23 (MLFRRLFSSSVIVQAASKTSLRK), are a transit peptide targeting the mitochondrion.

This sequence belongs to the mitochondrion-specific ribosomal protein mS41 family.

It is found in the mitochondrion. Functionally, involved in telomere length regulation. In Kluyveromyces lactis (strain ATCC 8585 / CBS 2359 / DSM 70799 / NBRC 1267 / NRRL Y-1140 / WM37) (Yeast), this protein is Small ribosomal subunit protein mS41 (FYV4).